The chain runs to 173 residues: Glucagon family neuropeptides (173 aa).

A signal peptide spans 1–22; the sequence is MSSKATLALLIYGIIMHYSVYS. Residues 23-80 constitute a propeptide that is removed on maturation; the sequence is SPLGLNYPNLRLENEVYDEDGNSLPALAFDSDQIAIRSPPSVADDLYTLYYPPEKGTE. At Lys-166 the chain carries Lysine amide. Positions 170-173 are excised as a propeptide; it reads LGYL.

The protein belongs to the glucagon family.

It is found in the secreted. In terms of biological role, primary role of GHRH is to release GH from the pituitary. Its function is as follows. PACAP plays pivotal roles as a neurotransmitter and/or a neuromodulator. The sequence is that of Glucagon family neuropeptides from Oncorhynchus nerka (Sockeye salmon).